The primary structure comprises 337 residues: Phosphate acyltransferase (337 aa).

The protein belongs to the PlsX family. As to quaternary structure, homodimer. Probably interacts with PlsY.

It is found in the cytoplasm. The catalysed reaction is a fatty acyl-[ACP] + phosphate = an acyl phosphate + holo-[ACP]. Its pathway is lipid metabolism; phospholipid metabolism. In terms of biological role, catalyzes the reversible formation of acyl-phosphate (acyl-PO(4)) from acyl-[acyl-carrier-protein] (acyl-ACP). This enzyme utilizes acyl-ACP as fatty acyl donor, but not acyl-CoA. This Hydrogenovibrio crunogenus (strain DSM 25203 / XCL-2) (Thiomicrospira crunogena) protein is Phosphate acyltransferase.